Reading from the N-terminus, the 540-residue chain is Patellin-4 (540 aa).

Ser-53 is subject to Phosphoserine. Residues 61-183 (FADLKESEKK…EKKTEDVVTE (123 aa)) are a coiled coil. Residues 89 to 140 (LKTKKKESSPMKEKKEEVVKPEAEVEKKKEEAAEEKVEEEKKSEAVVTEEAP) are disordered. The segment covering 94–140 (KESSPMKEKKEEVVKPEAEVEKKKEEAAEEKVEEEKKSEAVVTEEAP) has biased composition (basic and acidic residues). Lys-249 is covalently cross-linked (Glycyl lysine isopeptide (Lys-Gly) (interchain with G-Cter in ubiquitin)). Positions 258 to 428 (GEEFGEDLAT…QYGGFKTVDD (171 aa)) constitute a CRAL-TRIO domain. A GOLD domain is found at 433–534 (NETVSEVVVK…KKKVLYRYRT (102 aa)).

Belongs to the patellin family.

The protein resides in the membrane. It localises to the cytoplasm. Functionally, carrier protein that may be involved in membrane-trafficking events associated with cell plate formation during cytokinesis. Binds to some hydrophobic molecules such as phosphoinositides and promotes their transfer between the different cellular sites. This is Patellin-4 (PATL4) from Arabidopsis thaliana (Mouse-ear cress).